A 430-amino-acid polypeptide reads, in one-letter code: Asparagine--tRNA ligase (430 aa).

It belongs to the class-II aminoacyl-tRNA synthetase family. As to quaternary structure, homodimer.

Its subcellular location is the cytoplasm. The catalysed reaction is tRNA(Asn) + L-asparagine + ATP = L-asparaginyl-tRNA(Asn) + AMP + diphosphate + H(+). In Staphylococcus haemolyticus (strain JCSC1435), this protein is Asparagine--tRNA ligase.